A 455-amino-acid chain; its full sequence is Putative FBD-associated F-box protein At5g56400 (455 aa).

The F-box domain maps to 32–81 (VDKISDLPEDLLVHILSLLPTTNDIVATSGVSKRWESLWTKVHKLRFNDR). Residues 372-421 (WNQQPSYVPECLTKSLEIFEWRNYKATFRERDVAVYILKNSTCLKKTVIS) form the FBD domain.

In Arabidopsis thaliana (Mouse-ear cress), this protein is Putative FBD-associated F-box protein At5g56400.